The sequence spans 159 residues: Probable E3 ubiquitin-protein ligase RHA1A (159 aa).

The RING-type; atypical zinc-finger motif lies at 86-130 (CTVCLSDFESDDKVRQLPKCGHVFHHYCLDRWIVDYNKMKCPVCR).

As to expression, predominantly expressed in stems.

The catalysed reaction is S-ubiquitinyl-[E2 ubiquitin-conjugating enzyme]-L-cysteine + [acceptor protein]-L-lysine = [E2 ubiquitin-conjugating enzyme]-L-cysteine + N(6)-ubiquitinyl-[acceptor protein]-L-lysine.. Its pathway is protein modification; protein ubiquitination. Probable E3 ubiquitin-protein ligase that may possess E3 ubiquitin ligase activity in vitro. This is Probable E3 ubiquitin-protein ligase RHA1A from Arabidopsis thaliana (Mouse-ear cress).